The chain runs to 494 residues: MAWPRFLQRGALLTSFSHHHLAVFLLTFFSYSLLHASRKTFSNVKVSISKQWTPNAFNTSLDLPAEIWSSNHLFPSTEEATLFLGTLDTVFLFSYAVGLFISGIIGDRLNLRWVLSFGMCSSAFVVFVFGTLTEWLHFYNKWFYCGLWIVNGLLQSTGWPCVVAVMGNWFGKAGRGVVFGLWSACASVGNILGAFLASSVLQYGYEYAFLVTASVQFAGGIIIFFGLLVSPEEIGLPSIGAEESSEEDSQRPLIDGAENEDDYEPNYSIQEDRAVVQVKAISFHQACCLPGVIPYSLAYACLKLVNYSFFFWLPFYLSNNFGWKEAEADKLSIWYDVGGIIGGTLLGFISDVLQKRAPVLALSLFLAVWSLVGYSRSPNNKSINALLMTITGFFIGGPSNMVSSAISADLGRQELIQGNSEALATVTGIVDGTGSIGAAVGQYLVSLIQDNLGWMWVFYFFILMTSCTILFILPLIVREVFSLVQRRQAHSLNE.

A helical membrane pass occupies residues 10–30; sequence GALLTSFSHHHLAVFLLTFFS. The N-linked (GlcNAc...) asparagine glycan is linked to asparagine 58. The next 5 membrane-spanning stretches (helical) occupy residues 81–101, 113–133, 146–166, 177–197, and 209–229; these read TLFLGTLDTVFLFSYAVGLFI, WVLSFGMCSSAFVVFVFGTLT, GLWIVNGLLQSTGWPCVVAVM, VVFGLWSACASVGNILGAFLA, and FLVTASVQFAGGIIIFFGLLV. Residues 240–261 are disordered; it reads GAEESSEEDSQRPLIDGAENED. The next 6 membrane-spanning stretches (helical) occupy residues 297–317, 333–353, 357–377, 386–406, 428–448, and 457–477; these read LAYACLKLVNYSFFFWLPFYL, IWYDVGGIIGGTLLGFISDVL, APVLALSLFLAVWSLVGYSRS, LLMTITGFFIGGPSNMVSSAI, GIVDGTGSIGAAVGQYLVSLI, and VFYFFILMTSCTILFILPLIV.

Belongs to the major facilitator superfamily. Organophosphate:Pi antiporter (OPA) (TC 2.A.1.4) family. As to quaternary structure, interacts with ATRAID; the interaction is direct and both proteins are mutually dependent for their stability. In terms of processing, glycosylated.

The protein resides in the endoplasmic reticulum membrane. It is found in the lysosome membrane. In terms of biological role, unlike the other SLC37 members, lacks glucose-6-phosphate antiporter activity. In osteoclasts, forms a transporter complex with ATRAID for nitrogen-containing-bisphophonates (N-BPs) required for releasing N-BP molecules that have trafficked to lysosomes through fluid-phase endocytosis into the cytosol. This is Sugar phosphate exchanger 3 (Slc37a3) from Mus musculus (Mouse).